The primary structure comprises 557 residues: Dihydroxy-acid dehydratase (557 aa).

A [2Fe-2S] cluster-binding site is contributed by cysteine 50. Residue aspartate 82 participates in Mg(2+) binding. Cysteine 123 is a binding site for [2Fe-2S] cluster. Mg(2+) contacts are provided by aspartate 124 and lysine 125. Lysine 125 carries the N6-carboxylysine modification. Cysteine 195 contributes to the [2Fe-2S] cluster binding site. Glutamate 447 contributes to the Mg(2+) binding site. Residue serine 473 is the Proton acceptor of the active site.

The protein belongs to the IlvD/Edd family. In terms of assembly, homodimer. Requires [2Fe-2S] cluster as cofactor. It depends on Mg(2+) as a cofactor.

It carries out the reaction (2R)-2,3-dihydroxy-3-methylbutanoate = 3-methyl-2-oxobutanoate + H2O. The catalysed reaction is (2R,3R)-2,3-dihydroxy-3-methylpentanoate = (S)-3-methyl-2-oxopentanoate + H2O. Its pathway is amino-acid biosynthesis; L-isoleucine biosynthesis; L-isoleucine from 2-oxobutanoate: step 3/4. It participates in amino-acid biosynthesis; L-valine biosynthesis; L-valine from pyruvate: step 3/4. In terms of biological role, functions in the biosynthesis of branched-chain amino acids. Catalyzes the dehydration of (2R,3R)-2,3-dihydroxy-3-methylpentanoate (2,3-dihydroxy-3-methylvalerate) into 2-oxo-3-methylpentanoate (2-oxo-3-methylvalerate) and of (2R)-2,3-dihydroxy-3-methylbutanoate (2,3-dihydroxyisovalerate) into 2-oxo-3-methylbutanoate (2-oxoisovalerate), the penultimate precursor to L-isoleucine and L-valine, respectively. The chain is Dihydroxy-acid dehydratase from Nitrosospira multiformis (strain ATCC 25196 / NCIMB 11849 / C 71).